The primary structure comprises 329 residues: Dapdiamide synthesis protein DdaC (329 aa).

Fe(2+) is required as a cofactor.

It participates in antibiotic biosynthesis. Functionally, involved in dapdiamide antibiotics biosynthesis. Catalyzes the alpha-ketoglutarate-dependent epoxidation of the covalently bound N-beta-fumaramoyl-DAP-S-DdaD to generate N-beta-epoxysuccinamoyl-DAP in thioester linkage to DdaD. The protein is Dapdiamide synthesis protein DdaC of Enterobacter agglomerans (Erwinia herbicola).